We begin with the raw amino-acid sequence, 245 residues long: AP-1-like transcription factor YAP7 (245 aa).

Residues 1–144 (MRQRRSVVAV…NRDAQRAYRE (144 aa)) are disordered. Residues 74 to 94 (SANNDGSSKIKKVQTSNQKDQ) show a composition bias toward polar residues. 2 stretches are compositionally biased toward basic and acidic residues: residues 95–114 (MTTKDHENEGAKGHEGKSDD) and 135–144 (NRDAQRAYRE). Residues 125–188 (VDSVEKRRRQ…SDTKENLQKS (64 aa)) enclose the bZIP domain. The basic motif stretch occupies residues 130-149 (KRRRQNRDAQRAYRERRTTR). The segment at 153–181 (LEEKVEMLHNLVDDWQRKYKLLESEFSDT) is leucine-zipper.

The protein belongs to the bZIP family. YAP subfamily. In terms of assembly, homodimer.

The protein resides in the nucleus. In terms of biological role, probable transcription activator linked to cell cycle that induces transcription activation of genes in the environmental stress response and metabolism control pathways, like the closely related YAP5. The polypeptide is AP-1-like transcription factor YAP7 (YAP7) (Saccharomyces cerevisiae (strain ATCC 204508 / S288c) (Baker's yeast)).